We begin with the raw amino-acid sequence, 260 residues long: Zinc finger protein 575 (260 aa).

The tract at residues 22–81 is disordered; that stretch reads PGLGPGRWLLPGAHQPSCPPAPHQGPLQKPSQSAPGPTASASAPPRPRRRPPPQRPHRCP. The span at 51 to 64 shows a compositional bias: low complexity; it reads PSQSAPGPTASASA. Over residues 67-78 the composition is skewed to basic residues; the sequence is RPRRRPPPQRPH. C2H2-type zinc fingers lie at residues 78–100, 106–128, 134–156, 162–184, 192–214, and 228–255; these read HRCP…RLAH, HPCP…RLTH, HPCP…LWTH, YPCP…RHTH, YPCP…RLCH, and HRCS…QVEH.

It belongs to the krueppel C2H2-type zinc-finger protein family.

Its subcellular location is the nucleus. Functionally, may be involved in transcriptional regulation. The chain is Zinc finger protein 575 (ZNF575) from Macaca fascicularis (Crab-eating macaque).